We begin with the raw amino-acid sequence, 189 residues long: Potassium-transporting ATPase KdpC subunit (189 aa).

A helical transmembrane segment spans residues 11–31 (LFVLLTVITGVLYPVFVTGLA).

Belongs to the KdpC family. The system is composed of three essential subunits: KdpA, KdpB and KdpC.

Its subcellular location is the cell inner membrane. Part of the high-affinity ATP-driven potassium transport (or Kdp) system, which catalyzes the hydrolysis of ATP coupled with the electrogenic transport of potassium into the cytoplasm. This subunit acts as a catalytic chaperone that increases the ATP-binding affinity of the ATP-hydrolyzing subunit KdpB by the formation of a transient KdpB/KdpC/ATP ternary complex. This Polynucleobacter asymbioticus (strain DSM 18221 / CIP 109841 / QLW-P1DMWA-1) (Polynucleobacter necessarius subsp. asymbioticus) protein is Potassium-transporting ATPase KdpC subunit.